The following is a 1214-amino-acid chain: Myosin-1 (1214 aa).

Residues 1-21 (MAIIKRGARNKTAQEPAKRSA) are disordered. Positions 36-715 (VGVSDLTLLS…TLFALEHMRD (680 aa)) constitute a Myosin motor domain. 129 to 136 (GESGAGKT) contributes to the ATP binding site. Ser357 bears the Phosphoserine mark. Residues 404–486 (SIGILDIYGF…PGIFAAMNDS (83 aa)) are actin-binding. 2 consecutive IQ domains span residues 719 to 739 (YNMA…RIDS) and 740 to 765 (ATRI…EGSK). One can recognise a TH1 domain in the interval 771–961 (KERRTMSLLG…TILVRRGHPA (191 aa)). Disordered regions lie at residues 926 to 1090 (KPGK…SELP), 1129 to 1177 (HQGG…AAAQ), and 1193 to 1214 (NKMR…DDDW). Over residues 965 to 980 (QKKKPKKGKGHSKHHS) the composition is skewed to basic residues. Composition is skewed to low complexity over residues 981-1000 (TSTS…APVS) and 1037-1057 (AAQP…QKKV). A compositionally biased stretch (pro residues) spans 1058-1067 (APPPPPPPPM). Residues 1069–1131 (SSEPKYEAAY…PTNYVVKHQG (63 aa)) form the SH3 domain. Over residues 1157–1177 (VSSSQSETATTATPASVAAAQ) the composition is skewed to low complexity. Acidic residues predominate over residues 1200 to 1214 (DGEDNGNDDDDDDDW).

This sequence belongs to the TRAFAC class myosin-kinesin ATPase superfamily. Myosin family. Phosphorylation of the TEDS site (Ser-357) is required for the polarization of the actin cytoskeleton. Phosphorylation probably activates the myosin-I ATPase activity.

It is found in the cytoplasm. The protein resides in the cytoskeleton. It localises to the actin patch. Functionally, type-I myosin implicated in the organization of the actin cytoskeleton. Required for proper actin cytoskeleton polarization. At the cell cortex, assembles in patch-like structures together with proteins from the actin-polymerizing machinery and promotes actin assembly. Functions as actin nucleation-promoting factor (NPF) for the Arp2/3 complex. This Vanderwaltozyma polyspora (strain ATCC 22028 / DSM 70294 / BCRC 21397 / CBS 2163 / NBRC 10782 / NRRL Y-8283 / UCD 57-17) (Kluyveromyces polysporus) protein is Myosin-1 (MYO1).